A 736-amino-acid polypeptide reads, in one-letter code: Centrosomal protein kizuna (736 aa).

Positions 10 to 35 (HRAMKLQRNLRHCEGKRLELERELFQ) form a coiled coil. A compositionally biased stretch (polar residues) spans 192-208 (NTSFQLSQKMPVTSVAS). Disordered stretches follow at residues 192 to 238 (NTSF…SAQL), 279 to 305 (SFTHANPSGASPDACDYINNQTSDKHS), 323 to 348 (EDKQCLDSSSDLTVSISESEDDSYPP), and 642 to 690 (TVEE…NMST). Basic and acidic residues predominate over residues 210 to 219 (EDGRTHRAQI). The segment covering 328-339 (LDSSSDLTVSIS) has biased composition (polar residues). A compositionally biased stretch (low complexity) spans 658–668 (SETSFSSSEKS). Positions 678-690 (IQPNYMKSNNMST) are enriched in polar residues.

This sequence belongs to the kizuna family.

The protein resides in the cytoplasm. Its subcellular location is the cytoskeleton. The protein localises to the microtubule organizing center. It localises to the centrosome. It is found in the cilium basal body. Its function is as follows. Centrosomal protein required for establishing a robust mitotic centrosome architecture that can endure the forces that converge on the centrosomes during spindle formation. Required for stabilizing the expanded pericentriolar material around the centriole. The protein is Centrosomal protein kizuna (kiz) of Xenopus laevis (African clawed frog).